A 500-amino-acid polypeptide reads, in one-letter code: Anthranilate synthase component 1 (500 aa).

L-tryptophan is bound by residues serine 49 and 276 to 278 (PFM). 311 to 312 (GT) is a chorismate binding site. Glutamate 338 is a binding site for Mg(2+). Chorismate is bound by residues tyrosine 426, arginine 446, 460-462 (GGG), and glycine 462. Residue glutamate 475 participates in Mg(2+) binding.

This sequence belongs to the anthranilate synthase component I family. In terms of assembly, heterotetramer consisting of two non-identical subunits: a beta subunit (TrpG) and a large alpha subunit (TrpE). The cofactor is Mg(2+).

The catalysed reaction is chorismate + L-glutamine = anthranilate + pyruvate + L-glutamate + H(+). It participates in amino-acid biosynthesis; L-tryptophan biosynthesis; L-tryptophan from chorismate: step 1/5. Feedback inhibited by tryptophan. Its function is as follows. Part of a heterotetrameric complex that catalyzes the two-step biosynthesis of anthranilate, an intermediate in the biosynthesis of L-tryptophan. In the first step, the glutamine-binding beta subunit (TrpG) of anthranilate synthase (AS) provides the glutamine amidotransferase activity which generates ammonia as a substrate that, along with chorismate, is used in the second step, catalyzed by the large alpha subunit of AS (TrpE) to produce anthranilate. In the absence of TrpG, TrpE can synthesize anthranilate directly from chorismate and high concentrations of ammonia. The sequence is that of Anthranilate synthase component 1 (trpE) from Cereibacter sphaeroides (strain ATCC 17023 / DSM 158 / JCM 6121 / CCUG 31486 / LMG 2827 / NBRC 12203 / NCIMB 8253 / ATH 2.4.1.) (Rhodobacter sphaeroides).